We begin with the raw amino-acid sequence, 151 residues long: Large ribosomal subunit protein uL13 (151 aa).

It belongs to the universal ribosomal protein uL13 family. Part of the 50S ribosomal subunit.

In terms of biological role, this protein is one of the early assembly proteins of the 50S ribosomal subunit, although it is not seen to bind rRNA by itself. It is important during the early stages of 50S assembly. The protein is Large ribosomal subunit protein uL13 of Mycoplasma mycoides subsp. mycoides SC (strain CCUG 32753 / NCTC 10114 / PG1).